Reading from the N-terminus, the 74-residue chain is Amphipathic peptide CT1 (74 aa).

A signal peptide spans 1 to 23; it reads MKTQIVILFISMIMLQMFVQIEG. Val-37 is modified (valine amide). Positions 41 to 74 are excised as a propeptide; it reads GLRNLDDLDDLDLDHLFDSDVSDADLRLLKQMFR.

It belongs to the non-disulfide-bridged peptide (NDBP) superfamily. Short antimicrobial peptide (group 4) family. In terms of tissue distribution, expressed by the venom gland.

It localises to the secreted. Its subcellular location is the target cell membrane. Functionally, antimicrobial peptide that is rapidly bactericidal against Gram-positive bacteria (MIC=12.5 ug/ml against S.aureus, and MIC=100 ug/ml against M.luteus). Is also active against clinical antibiotics-resistant bacterial strains. The polypeptide is Amphipathic peptide CT1 (Scorpiops tibetanus (Scorpion)).